The chain runs to 162 residues: Universal stress protein MJ0577 (162 aa).

Residues P11, V41, 127–133 (GSHGKTN), and 141–143 (SVT) each bind ATP.

This sequence belongs to the universal stress protein A family. Homodimer. The cofactor is Mn(2+).

The protein resides in the cytoplasm. In Methanocaldococcus jannaschii (strain ATCC 43067 / DSM 2661 / JAL-1 / JCM 10045 / NBRC 100440) (Methanococcus jannaschii), this protein is Universal stress protein MJ0577.